We begin with the raw amino-acid sequence, 249 residues long: Formylaminopyrimidine import ATP-binding protein ThiZ (249 aa).

Residues 6–228 form the ABC transporter domain; sequence LTFEEVSFAY…RRKMETTEKM (223 aa). An ATP-binding site is contributed by 39 to 46; sequence AKSGSGKS.

This sequence belongs to the ABC transporter superfamily. The complex is likely composed of an ATP-binding protein (ThiZ), a transmembrane protein (ThiX) and a solute-binding protein (ThiY).

Its subcellular location is the cell membrane. The protein operates within cofactor biosynthesis; thiamine diphosphate biosynthesis. Its function is as follows. Participates in a thiamine pyrimidine salvage pathway as part of the ABC transporter complex ThiXYZ involved in the import of thiamine degradation products such as the formylaminopyrimidine N-formyl-4-amino-5-aminomethyl-2-methylpyrimidine (FAMP). Is likely responsible for energy coupling to the transport system. This chain is Formylaminopyrimidine import ATP-binding protein ThiZ, found in Halalkalibacterium halodurans (strain ATCC BAA-125 / DSM 18197 / FERM 7344 / JCM 9153 / C-125) (Bacillus halodurans).